Here is a 166-residue protein sequence, read N- to C-terminus: NAD(P)H-quinone oxidoreductase subunit I, chloroplastic (166 aa).

4Fe-4S ferredoxin-type domains follow at residues 55–84 (GRIH…VDWK) and 95–124 (LNYS…MTEE). Positions 64, 67, 70, 74, 104, 107, 110, and 114 each coordinate [4Fe-4S] cluster.

Belongs to the complex I 23 kDa subunit family. As to quaternary structure, NDH is composed of at least 16 different subunits, 5 of which are encoded in the nucleus. [4Fe-4S] cluster serves as cofactor.

The protein localises to the plastid. It localises to the chloroplast thylakoid membrane. It carries out the reaction a plastoquinone + NADH + (n+1) H(+)(in) = a plastoquinol + NAD(+) + n H(+)(out). The catalysed reaction is a plastoquinone + NADPH + (n+1) H(+)(in) = a plastoquinol + NADP(+) + n H(+)(out). Functionally, NDH shuttles electrons from NAD(P)H:plastoquinone, via FMN and iron-sulfur (Fe-S) centers, to quinones in the photosynthetic chain and possibly in a chloroplast respiratory chain. The immediate electron acceptor for the enzyme in this species is believed to be plastoquinone. Couples the redox reaction to proton translocation, and thus conserves the redox energy in a proton gradient. This chain is NAD(P)H-quinone oxidoreductase subunit I, chloroplastic, found in Lasianthaea macrocephala (Lipochaeta macrocephala).